A 310-amino-acid polypeptide reads, in one-letter code: GTPase Era (310 aa).

Residues 17-184 (RSGFVALIGA…MDYLAERLPE (168 aa)) enclose the Era-type G domain. The interval 25–32 (GATNAGKS) is G1. 25–32 (GATNAGKS) contacts GTP. The G2 stretch occupies residues 51–55 (QTTRA). The G3 stretch occupies residues 72 to 75 (DTPG). Residues 72–76 (DTPGI) and 134–137 (NKVD) each bind GTP. The segment at 134–137 (NKVD) is G4. A G5 region spans residues 163–165 (ISA). In terms of domain architecture, KH type-2 spans 215–292 (LHQELPYASH…HLFLFVKVRE (78 aa)).

Belongs to the TRAFAC class TrmE-Era-EngA-EngB-Septin-like GTPase superfamily. Era GTPase family. As to quaternary structure, monomer.

It is found in the cytoplasm. It localises to the cell inner membrane. An essential GTPase that binds both GDP and GTP, with rapid nucleotide exchange. Plays a role in 16S rRNA processing and 30S ribosomal subunit biogenesis and possibly also in cell cycle regulation and energy metabolism. The sequence is that of GTPase Era from Sinorhizobium medicae (strain WSM419) (Ensifer medicae).